The primary structure comprises 78 residues: Putative defensin-like protein 288 (78 aa).

An N-terminal signal peptide occupies residues 1-21 (MSNLRLTIAVFLAALFQTLWW).

This sequence belongs to the DEFL family.

It localises to the secreted. The polypeptide is Putative defensin-like protein 288 (Arabidopsis thaliana (Mouse-ear cress)).